A 294-amino-acid polypeptide reads, in one-letter code: Retinoic acid receptor responder protein 1 (294 aa).

The Lumenal segment spans residues 1-20; that stretch reads MQPRRQRLPAPWSGPRGPRP. Residues 21 to 42 form a helical; Signal-anchor for type III membrane protein membrane-spanning segment; it reads TAPLLALLLLLAPVAAPAGSGD. 2 Cystatin LXN-type domains span residues 38 to 153 and 173 to 276; these read AGSG…EKKK and EIVS…TPEE. Ser40 carries O-linked (Xyl...) (chondroitin sulfate) serine glycosylation. The Cytoplasmic portion of the chain corresponds to 43 to 294; the sequence is PDDPGQPQDA…AVVPTELSNF (252 aa). Positions 273 to 294 are disordered; the sequence is TPEEASGTEEGSAVVPTELSNF.

This sequence belongs to the protease inhibitor I47 (latexin) family. In terms of assembly, interacts with AGBL2, KIF11 and MAPRE1. In terms of processing, not N-glycosylated. O-glycosylated; contains chondroitin sulfate. As to expression, detected in urine (at protein level).

The protein localises to the membrane. It is found in the secreted. Functionally, inhibitor of the cytoplasmic carboxypeptidase AGBL2, may regulate the alpha-tubulin tyrosination cycle. The protein is Retinoic acid receptor responder protein 1 (RARRES1) of Homo sapiens (Human).